A 328-amino-acid chain; its full sequence is UPF0194 membrane protein YPA_1093 (328 aa).

Positions 1 to 22 are cleaved as a signal peptide; it reads MNRKKIIVAAVIVALLATLAYG. Coiled-coil stretches lie at residues 80-109 and 141-209; these read YLNA…REEE and KAVS…ILLA.

Belongs to the UPF0194 family.

It is found in the periplasm. This is UPF0194 membrane protein YPA_1093 from Yersinia pestis bv. Antiqua (strain Antiqua).